We begin with the raw amino-acid sequence, 294 residues long: MGLGLVDCHCHLSASDFDNDLDDVLEKARKANVMALVAVAEHAGEFERIMQLSERYNGFVLPCLGVHPVQELSPEKPRSVTLKDLDVALPIIEKYKDRLLAIGEVGLDFTPRYAGTDEEKEEQRQVLIRQVQLAKRLNVPLNVHSRSAGRPTISLLREQGAEQVLLHAFDGRPSVAMEGVRAGYYFSIPPSIVRSGQKQKLVKQLPLSSICLETDSPALGPEKLTRNEPCNISIAAEFIAQVKGISVEEVREVTTRNAFRLFPKLQSLLQKELQSHPLQAKSAQGSAGESKGLL.

Positions 9, 11, 104, 144, 167, and 215 each coordinate Zn(2+).

It belongs to the metallo-dependent hydrolases superfamily. TatD-type hydrolase family. Requires Mn(2+) as cofactor. Ca(2+) serves as cofactor. The cofactor is Mg(2+). It depends on Zn(2+) as a cofactor.

Its subcellular location is the nucleus. Its activity is regulated as follows. The 3'-exonuclease activity is sensitive to the metal ion present in the active site, whereas the AP endodeoxyribonuclease activity is observed in a variety of divalent metal cofactors. 3'-exoxonuclease activity is suppressed in the presence of Ca(2+), Zn(2+) and Ni(2+). Its function is as follows. Exhibits 3'-exonuclease activities and apurinic/apyrimidinic (AP) endonuclease (in vitro). Show preferential AP endonuclease activity on double-stranded DNA substrates and 3'- exonuclease activity on single-stranded DNA. The sequence is that of Putative deoxyribonuclease TATDN3 (Tatdn3) from Mus musculus (Mouse).